Consider the following 245-residue polypeptide: MKIDYLTLFPEMFDGVLNHSIMKRAQENNKLQINTVNFRDYAINKHNQVDDYPYGGGQGMVLKPEPVFNAMEDLDVTEQARVILMCPQGEPFSHQKAVELSKADHIVFICGHYEGYDERIRTHLVTDEISMGDYVLTGGELPAMTMTDAIVRLIPGVLGNEQSHQDDSFSDGLLEFPQYTRPREFKGLTVPDVLLSGNHANIDAWRHEQKLIRTYNKRPDLIEKYPLTNADKQILERYKIGLKKG.

Residues Gly111 and 131–136 (MGDYVL) contribute to the S-adenosyl-L-methionine site.

The protein belongs to the RNA methyltransferase TrmD family. In terms of assembly, homodimer.

It localises to the cytoplasm. The catalysed reaction is guanosine(37) in tRNA + S-adenosyl-L-methionine = N(1)-methylguanosine(37) in tRNA + S-adenosyl-L-homocysteine + H(+). Specifically methylates guanosine-37 in various tRNAs. The protein is tRNA (guanine-N(1)-)-methyltransferase of Staphylococcus aureus (strain MRSA252).